The chain runs to 533 residues: uncharacterized protein (533 aa).

Residues 1–21 form the signal peptide; that stretch reads MVKVWKIGFGVFLPTALLFSA. C22 carries N-palmitoyl cysteine lipidation. C22 carries the S-diacylglycerol cysteine lipid modification. The disordered stretch occupies residues 91–111; the sequence is LSKNKEGQTASQTRSSSEQTT. Over residues 97–111 the composition is skewed to polar residues; sequence GQTASQTRSSSEQTT.

The protein belongs to the MG067/MG068/MG395 family.

The protein resides in the cell membrane. This is an uncharacterized protein from Mycoplasma pneumoniae (strain ATCC 29342 / M129 / Subtype 1) (Mycoplasmoides pneumoniae).